A 95-amino-acid polypeptide reads, in one-letter code: Integration host factor subunit beta (95 aa).

This sequence belongs to the bacterial histone-like protein family. Heterodimer of an alpha and a beta chain.

In terms of biological role, this protein is one of the two subunits of integration host factor, a specific DNA-binding protein that functions in genetic recombination as well as in transcriptional and translational control. The sequence is that of Integration host factor subunit beta from Shewanella sp. (strain ANA-3).